Consider the following 625-residue polypeptide: Tyrosine-protein kinase ITK/TSK (625 aa).

In terms of domain architecture, PH spans 4–117 (FILLEEQLIK…WVLTLKEETR (114 aa)). A Btk-type zinc finger spans residues 119 to 155 (NNSLVSKYHPNFWMDGRWRCCSQLEKPAVGCAPYDPS). Zn(2+) is bound by residues H127, C138, C139, and C149. Positions 153–174 (DPSKNASKKPLPPTPEDNRRSF) are disordered. Residues 177-237 (PEETLVIALY…PSSYLVEKSP (61 aa)) enclose the SH3 domain. Position 186 is a phosphotyrosine; by autocatalysis (Y186). An SH2 domain is found at 245-343 (WYNKSISRDK…GLVTRLRYPV (99 aa)). The 253-residue stretch at 368-620 (LTFVQEIGSG…SQLLSQLAEI (253 aa)) folds into the Protein kinase domain. ATP contacts are provided by residues 374 to 382 (IGSGQFGLV) and K396. D487 serves as the catalytic Proton acceptor. Y517 bears the Phosphotyrosine; by LCK mark. Residue S570 is modified to Phosphoserine.

It belongs to the protein kinase superfamily. Tyr protein kinase family. TEC subfamily. Homooligomerizes; this association negatively regulates kinase activity. Interacts with PPIA/CYPA; this interaction regulates TCR signal strength via a proline-directed conformational switch in ITK. Interacts with THEMIS. Interacts with FASLG. Interacts with VAV1; this interaction is important for VAV1 localization and TCR-induced actin polarization. Interacts with TBX21. Requires Zn(2+) as cofactor. Phosphorylated at Tyr-517 in the activation loop of the kinase domain by LCK. Subsequent autophosphorylation at Tyr-186 leads to the kinase activation. The autophosphorylated Tyr-186 lies within the substrate binding sequence of the SH3 domain. In terms of processing, ubiquitinated. As to expression, is detected in the thymus, lymph node and very faintly in the spleen, but is not detected in the liver, lung, kidney, heart, brain, intestine or testis. Expressed in T-lymphocytes and mast cells. It may also be expressed in natural killer cells.

The protein localises to the cytoplasm. The protein resides in the nucleus. It catalyses the reaction L-tyrosyl-[protein] + ATP = O-phospho-L-tyrosyl-[protein] + ADP + H(+). Functionally, tyrosine kinase that plays an essential role in regulation of the adaptive immune response. Regulates the development, function and differentiation of conventional T-cells and nonconventional NKT-cells. When antigen presenting cells (APC) activate T-cell receptor (TCR), a series of phosphorylation lead to the recruitment of ITK to the cell membrane, in the vicinity of the stimulated TCR receptor, where it is phosphorylated by LCK. Phosphorylation leads to ITK autophosphorylation and full activation. Once activated, phosphorylates PLCG1, leading to the activation of this lipase and subsequent cleavage of its substrates. In turn, the endoplasmic reticulum releases calcium in the cytoplasm and the nuclear activator of activated T-cells (NFAT) translocates into the nucleus to perform its transcriptional duty. Phosphorylates 2 essential adapter proteins: the linker for activation of T-cells/LAT protein and LCP2. Then, a large number of signaling molecules such as VAV1 are recruited and ultimately lead to lymphokine production, T-cell proliferation and differentiation. Required for TCR-mediated calcium response in gamma-delta T-cells, may also be involved in the modulation of the transcriptomic signature in the Vgamma2-positive subset of immature gamma-delta T-cells. Phosphorylates TBX21 at 'Tyr-525' and mediates its interaction with GATA3. In Mus musculus (Mouse), this protein is Tyrosine-protein kinase ITK/TSK (Itk).